The primary structure comprises 177 residues: MSDIILDSKSFQSAVSKISREISDNNKNIREVAIIGIQNKGVFLAKRILAEIAKLAGIGRSLIPFGTLDITLYRDDLDDLGSKIPVIKDTVIPFDTSRKNIILIDDVLYTGRTVRAALDVLMDFGRPKSIQLAVLIDRGFRELPIEAKYIGIRYQSEELIKVECKETDGVDRVTFIK.

Positions 101–113 match the PRPP-binding motif; it reads IILIDDVLYTGRT.

The protein belongs to the purine/pyrimidine phosphoribosyltransferase family. PyrR subfamily.

The catalysed reaction is UMP + diphosphate = 5-phospho-alpha-D-ribose 1-diphosphate + uracil. Functionally, regulates the transcription of the pyrimidine nucleotide (pyr) operon in response to exogenous pyrimidines. Also displays a weak uracil phosphoribosyltransferase activity which is not physiologically significant. This Endomicrobium trichonymphae protein is Bifunctional protein PyrR.